Reading from the N-terminus, the 316-residue chain is Pantothenate kinase (316 aa).

95-102 serves as a coordination point for ATP; the sequence is GSVAVGKS.

Belongs to the prokaryotic pantothenate kinase family.

The protein resides in the cytoplasm. The enzyme catalyses (R)-pantothenate + ATP = (R)-4'-phosphopantothenate + ADP + H(+). Its pathway is cofactor biosynthesis; coenzyme A biosynthesis; CoA from (R)-pantothenate: step 1/5. The polypeptide is Pantothenate kinase (Shewanella baltica (strain OS195)).